A 390-amino-acid chain; its full sequence is F-box/kelch-repeat protein At3g06570 (390 aa).

An F-box domain is found at 23 to 69; it reads SASFQSLPDDLILSIVARVPRLYHRTVSLVCKSFRSLLVSPELYKAR. Kelch repeat units follow at residues 140–183, 185–234, and 236–281; these read DIYN…VLDR, IFVV…CRTA, and IDGK…QIHN.

This is F-box/kelch-repeat protein At3g06570 from Arabidopsis thaliana (Mouse-ear cress).